We begin with the raw amino-acid sequence, 259 residues long: Leucine-rich repeat-containing protein 3B (259 aa).

Residues 1–33 form the signal peptide; it reads MNLVDLWLTRSLSMCLLLQSFVLMILCFHSASM. Positions 34–64 constitute an LRRNT domain; that stretch reads CPKGCLCSSSGGLNVTCSNANLKEIPRDLPP. A glycan (N-linked (GlcNAc...) asparagine) is linked at N47. LRR repeat units lie at residues 65–86, 89–110, and 114–135; these read ETVL…IFKD, QLRV…AFKG, and TLQT…AFNN. N-linked (GlcNAc...) asparagine glycosylation is present at N94. An LRRCT domain is found at 145-197; the sequence is NPWHCDCTLQQVLRSMVSNHETAHNVICKTSVLDEHAGRPFLNAANDADLCNL. A helical transmembrane segment spans residues 205–225; sequence AMLVTMFGWFTMVISYVVYYV.

Belongs to the LRRC3 family.

The protein resides in the membrane. The polypeptide is Leucine-rich repeat-containing protein 3B (LRRC3B) (Bos taurus (Bovine)).